Here is a 322-residue protein sequence, read N- to C-terminus: Malate dehydrogenase (322 aa).

NAD(+) is bound by residues 10 to 15 (GSGQIG) and D34. R83 and R89 together coordinate substrate. Residues N96 and 119–121 (ITN) contribute to the NAD(+) site. Residues N121 and R152 each contribute to the substrate site. The active-site Proton acceptor is H176.

It belongs to the LDH/MDH superfamily. MDH type 3 family.

The enzyme catalyses (S)-malate + NAD(+) = oxaloacetate + NADH + H(+). In terms of biological role, catalyzes the reversible oxidation of malate to oxaloacetate. This Nitrobacter hamburgensis (strain DSM 10229 / NCIMB 13809 / X14) protein is Malate dehydrogenase.